Reading from the N-terminus, the 276-residue chain is NADPH-dependent 7-cyano-7-deazaguanine reductase (276 aa).

Substrate is bound at residue 80-82 (IES). Residue 82–83 (SK) coordinates NADPH. The active-site Thioimide intermediate is Cys-178. Asp-185 functions as the Proton donor in the catalytic mechanism. Position 217–218 (217–218 (HE)) interacts with substrate. 246-247 (RG) provides a ligand contact to NADPH.

The protein belongs to the GTP cyclohydrolase I family. QueF type 2 subfamily. As to quaternary structure, homodimer.

The protein resides in the cytoplasm. The catalysed reaction is 7-aminomethyl-7-carbaguanine + 2 NADP(+) = 7-cyano-7-deazaguanine + 2 NADPH + 3 H(+). The protein operates within tRNA modification; tRNA-queuosine biosynthesis. Catalyzes the NADPH-dependent reduction of 7-cyano-7-deazaguanine (preQ0) to 7-aminomethyl-7-deazaguanine (preQ1). This is NADPH-dependent 7-cyano-7-deazaguanine reductase from Teredinibacter turnerae (strain ATCC 39867 / T7901).